Reading from the N-terminus, the 322-residue chain is Sideroflexin-1 (322 aa).

Serine 2 carries the N-acetylserine modification. Residues 2–102 lie on the Mitochondrial matrix side of the membrane; the sequence is SGELPPNINI…MSAQVPMNMT (101 aa). A helical transmembrane segment spans residues 103 to 120; it reads ITGCMMTFYRTTPAVLFW. Over 121–146 the chain is Mitochondrial intermembrane; that stretch reads QWINQSFNAVVNYTNRSGDAPLTVNE. The helical transmembrane segment at 147–167 threads the bilayer; that stretch reads LGTAYVSATTGAVATALGLNA. At 168 to 174 the chain is on the mitochondrial matrix side; that stretch reads LTKHVSP. A helical transmembrane segment spans residues 175 to 195; sequence LIGRFVPFAAVAAANCINIPL. Topologically, residues 196–228 are mitochondrial intermembrane; sequence MRQRELRAGIPVTDENGNRLGESANAAKQAITQ. Residues 229–249 traverse the membrane as a helical segment; the sequence is VVISRILMAAPGMAIPPFIMN. Residues 250–266 lie on the Mitochondrial matrix side of the membrane; that stretch reads TLEKKAFLKRFPWMSAP. The helical transmembrane segment at 267–287 threads the bilayer; it reads IQVGLVGFCLVFATPLCCALF. Residues 288 to 322 are Mitochondrial intermembrane-facing; that stretch reads PQKSSMSVTSLEAELQAKIRETSPELRRVYFNKGL.

It belongs to the sideroflexin family.

Its subcellular location is the mitochondrion inner membrane. It carries out the reaction L-serine(in) = L-serine(out). The catalysed reaction is L-alanine(in) = L-alanine(out). The enzyme catalyses L-cysteine(in) = L-cysteine(out). Amino acid transporter importing serine, an essential substrate of the mitochondrial branch of the one-carbon pathway, into mitochondria. Mitochondrial serine is then converted to glycine and formate, which exits to the cytosol where it is used to generate the charged folates that serve as one-carbon donors. May also transport other amino acids including alanine and cysteine. In Sus scrofa (Pig), this protein is Sideroflexin-1 (SFXN1).